Here is a 158-residue protein sequence, read N- to C-terminus: L-alanine exporter AlaE (158 aa).

The next 4 helical transmembrane spans lie at 23–43, 53–73, 92–112, and 117–137; these read FAMVVYCSVVGMMIEIFVSGM, LVAIPVNMVIAWPYGLYRDAV, VIAYITFQSPVYAAILLFVGA, and IITAVSSNIVVSMMMGAAYGY.

It belongs to the AlaE exporter family.

It localises to the cell inner membrane. In terms of biological role, exports L-alanine. In Cronobacter sakazakii (strain ATCC BAA-894) (Enterobacter sakazakii), this protein is L-alanine exporter AlaE.